The following is a 721-amino-acid chain: Translation initiation factor eIF2B subunit epsilon (721 aa).

The segment at 1–40 (MATTVVAPPGAVSDRANKRGGGPGGGGGGGGARGAEEESP) is disordered. Position 2 is an N-acetylalanine (Ala2). The residue at position 19 (Arg19) is an Omega-N-methylarginine. Positions 19-33 (RGGGPGGGGGGGGAR) are enriched in gly residues. Residues Lys61 and Lys103 each participate in a glycyl lysine isopeptide (Lys-Gly) (interchain with G-Cter in ubiquitin) cross-link. Ser130 is subject to Phosphoserine. Glycyl lysine isopeptide (Lys-Gly) (interchain with G-Cter in ubiquitin) cross-links involve residues Lys141 and Lys217. Thr322 is subject to Phosphothreonine. Disordered stretches follow at residues 446 to 478 (GSVI…KEKA) and 517 to 545 (LTIN…AGSP). Ser450 is subject to Phosphoserine. A compositionally biased stretch (acidic residues) spans 456-465 (AEEDEDDGQF). Phosphoserine occurs at positions 466, 469, 532, and 540. The segment covering 528–540 (ESERSMDSEELDS) has biased composition (basic and acidic residues). A W2 domain is found at 543-720 (GSPQLDDIKV…KEAEEESSED (178 aa)). Residue Ser544 is modified to Phosphoserine; by DYRK2. At Ser717 the chain carries Phosphoserine.

The protein belongs to the eIF-2B gamma/epsilon subunits family. Component of the translation initiation factor 2B (eIF2B) complex which is a heterodecamer of two sets of five different subunits: alpha, beta, gamma, delta and epsilon. Subunits alpha, beta and delta comprise a regulatory subcomplex and subunits epsilon and gamma comprise a catalytic subcomplex. Within the complex, the hexameric regulatory complex resides at the center, with the two heterodimeric catalytic subcomplexes bound on opposite sides. Post-translationally, phosphorylated at Ser-544 by DYRK2; this is required for subsequent phosphorylation by GSK3B. Phosphorylated on serine and threonine residues by GSK3B; phosphorylation inhibits its function. In terms of processing, polyubiquitinated, probably by NEDD4. As to expression, ubiquitously expressed.

The protein localises to the cytoplasm. The protein resides in the cytosol. Its activity is regulated as follows. Activated by the chemical integrated stress response (ISR) inhibitor ISRIB which stimulates guanine nucleotide exchange factor activity for both phosphorylated and unphosphorylated eIF2. Functionally, acts as a component of the translation initiation factor 2B (eIF2B) complex, which catalyzes the exchange of GDP for GTP on eukaryotic initiation factor 2 (eIF2) gamma subunit. Its guanine nucleotide exchange factor activity is repressed when bound to eIF2 complex phosphorylated on the alpha subunit, thereby limiting the amount of methionyl-initiator methionine tRNA available to the ribosome and consequently global translation is repressed. This chain is Translation initiation factor eIF2B subunit epsilon (EIF2B5), found in Oryctolagus cuniculus (Rabbit).